The sequence spans 127 residues: Small integral membrane protein 33 (127 aa).

An N-linked (GlcNAc...) asparagine glycan is attached at Asn-15. The helical transmembrane segment at 38–58 (PLLAAIIAAFVLLAICIVLAV) threads the bilayer.

It localises to the membrane. The polypeptide is Small integral membrane protein 33 (Mus musculus (Mouse)).